A 493-amino-acid chain; its full sequence is GTPase Der (493 aa).

The region spanning 3–166 (PVIALVGRPN…EALGIFPKDN (164 aa)) is the EngA-type G 1 domain. GTP contacts are provided by residues 9-16 (GRPNVGKS), 56-60 (DTGGI), and 118-121 (NKVD). Residues 166–195 (NAEEEGEGEPASEEVAEGEEPTRIPGPSEK) are disordered. Positions 167–184 (AEEEGEGEPASEEVAEGE) are enriched in acidic residues. The EngA-type G 2 domain maps to 198–371 (IKIAIIGRPN…SVQESFRSAV (174 aa)). Residues 204–211 (GRPNVGKS), 251–255 (DTAGV), and 316–319 (NKWD) contribute to the GTP site. The region spanning 372-456 (TRWPTSRLTS…PIRIEYKGGE (85 aa)) is the KH-like domain. The segment covering 454–463 (GGENPYEGKK) has biased composition (basic and acidic residues). The interval 454 to 493 (GGENPYEGKKNSLTARQVNKKRRLMSHHKKAEKKKKDKRR) is disordered. Basic residues predominate over residues 471–493 (VNKKRRLMSHHKKAEKKKKDKRR).

This sequence belongs to the TRAFAC class TrmE-Era-EngA-EngB-Septin-like GTPase superfamily. EngA (Der) GTPase family. In terms of assembly, associates with the 50S ribosomal subunit.

Its function is as follows. GTPase that plays an essential role in the late steps of ribosome biogenesis. The chain is GTPase Der from Pseudomonas aeruginosa (strain ATCC 15692 / DSM 22644 / CIP 104116 / JCM 14847 / LMG 12228 / 1C / PRS 101 / PAO1).